The following is a 370-amino-acid chain: MISLNSSSIPSSQTKKVVIGMSGGVDSSVAAWMLKEQGFEVIGLFMKNWEDDDNDEYCSARQDWLDVVSVADMIGIDVEAVNFAAEYRERVFADFLCEYAAGRTPNPDVLCNAEIKFKAFLDHAMSLGADAIATGHYARVRHEGGRVQLLKAVDASKDQSYFLHRLTQQQLSKVMFPLGEIPKTEVRKIAEQIGLHNAKKKDSTGICFIGERPFREFLNRYLPRVPGPIKTPEGKTVGEHMGLAFFTLGQRKGIGLGGSQDGNGDAWYVARKDMANNTLYVAQGHEHPWLLANKLSAVDASWVSGAAPEPGSYSAKTRYRQTDSACTYIADIDTNNFSLSFPEAQWAVTPGQSAVLYDGDICLGGGIIST.

ATP-binding positions include 20–27 and Met46; that span reads GMSGGVDS. The segment at 106 to 108 is interaction with target base in tRNA; that stretch reads NPD. The active-site Nucleophile is the Cys111. Cys111 and Cys207 are oxidised to a cystine. Gly135 is an ATP binding site. Residues 157–159 form an interaction with tRNA region; it reads KDQ. Residue Cys207 is the Cysteine persulfide intermediate of the active site. The segment at 318–319 is interaction with tRNA; sequence RY.

It belongs to the MnmA/TRMU family.

The protein localises to the cytoplasm. It carries out the reaction S-sulfanyl-L-cysteinyl-[protein] + uridine(34) in tRNA + AH2 + ATP = 2-thiouridine(34) in tRNA + L-cysteinyl-[protein] + A + AMP + diphosphate + H(+). Its function is as follows. Catalyzes the 2-thiolation of uridine at the wobble position (U34) of tRNA, leading to the formation of s(2)U34. This Polynucleobacter asymbioticus (strain DSM 18221 / CIP 109841 / QLW-P1DMWA-1) (Polynucleobacter necessarius subsp. asymbioticus) protein is tRNA-specific 2-thiouridylase MnmA.